The primary structure comprises 563 residues: Arginine--tRNA ligase (563 aa).

The 'HIGH' region motif lies at 121-131; it reads PNIAKPFSIGH.

This sequence belongs to the class-I aminoacyl-tRNA synthetase family. Monomer.

Its subcellular location is the cytoplasm. It carries out the reaction tRNA(Arg) + L-arginine + ATP = L-arginyl-tRNA(Arg) + AMP + diphosphate. The sequence is that of Arginine--tRNA ligase from Streptococcus thermophilus (strain ATCC BAA-250 / LMG 18311).